The primary structure comprises 179 residues: Alpha-S2-casein-like A (179 aa).

The signal sequence occupies residues 1–15 (MKFFIFTCLVAAALA). Ser24 and Ser25 each carry phosphoserine. The disordered stretch occupies residues 44–121 (FQTPQDSASS…NAIYDVPSQE (78 aa)). The segment covering 63-74 (ISEKIEQSEEQK) has biased composition (basic and acidic residues). Over residues 93–110 (PQICTPYQQQSSVNQRPQ) the composition is skewed to polar residues.

This sequence belongs to the alpha-casein family. Mammary gland specific. Secreted in milk.

The protein resides in the secreted. Functionally, important role in the capacity of milk to transport calcium phosphate. This Rattus norvegicus (Rat) protein is Alpha-S2-casein-like A (Csn1s2a).